The primary structure comprises 1951 residues: [F-actin]-monooxygenase MICAL2 (1951 aa).

The tract at residues 2-494 is monooxygenase domain; sequence GENEDEKQAQ…KHLYITKEMD (493 aa). FAD-binding positions include cysteine 97, 116 to 118, 123 to 125, phenylalanine 183, tyrosine 298, and aspartate 398; these read EKR and RNN. The region spanning 516-619 is the Calponin-homology (CH) domain; the sequence is DIRPNKLLTW…MVMYLSKFYE (104 aa). Phosphoserine is present on serine 631. Residues 660–681 carry the Nuclear localization signal motif; the sequence is RKRTPRVDTQTEENDMNKRRRQ. Disordered regions lie at residues 663-712 and 891-921; these read TPRV…SQNK and KRVP…AADS. Low complexity predominate over residues 691 to 700; that stretch reads SFSSRSLGSS. Residues 896-909 show a composition bias toward pro residues; sequence AHPPSPPSCLPSPH. Residues 910–921 show a composition bias toward low complexity; that stretch reads PAAASSPPAADS. The region spanning 991-1053 is the LIM zinc-binding domain; it reads DTCYFCKKRV…KPHFVHCKTS (63 aa). Zn(2+) is bound by residues cysteine 993, cysteine 996, histidine 1014, cysteine 1017, cysteine 1020, cysteine 1023, cysteine 1043, and histidine 1046. The residue at position 1052 (threonine 1052) is a Phosphoserine. Disordered stretches follow at residues 1054–1141, 1158–1314, 1348–1368, 1383–1427, 1451–1476, 1489–1580, 1594–1624, 1678–1697, 1706–1731, and 1747–1766; these read SKQR…RISP, TSED…VSPT, VEPG…EGCQ, ILGK…RKLG, HKTG…TCSS, QKKA…AKKA, AQAS…STTP, GDFF…VPSL, STSM…GEGG, and PVTE…EADS. A compositionally biased stretch (basic and acidic residues) spans 1061–1070; sequence AELNQQREEE. Composition is skewed to polar residues over residues 1129–1138, 1228–1239, and 1246–1256; these read PRPSEWTSVR, HSLQSPTPSKYQ, and QSNSTPMNQRA. Over residues 1257 to 1268 the composition is skewed to pro residues; that stretch reads PSPPKEPPPPPS. Residues 1269–1285 are compositionally biased toward low complexity; sequence LSSSSSLPSSFSSASVP. Positions 1291–1306 are enriched in polar residues; that stretch reads DSSSPQVTYNLHSPQI. The tract at residues 1314 to 1353 is interaction with MAPK1; that stretch reads TPIYLRRARAQGIVKEIPLYLPHSPMLESTEDCLVEPGRE. The span at 1350 to 1359 shows a compositional bias: basic and acidic residues; the sequence is PGRESLRSPE. Residues 1532–1545 show a composition bias toward basic and acidic residues; that stretch reads EAGKKTSPKPESKT. A compositionally biased stretch (low complexity) spans 1599 to 1616; sequence LSLPNSILRSRSLPSRPS. A compositionally biased stretch (basic and acidic residues) spans 1678-1688; the sequence is GDFFNSPKEEG. At serine 1683 the chain carries Phosphoserine. Over residues 1706–1720 the composition is skewed to polar residues; sequence STSMGQVAHPSSTGQ. Residues 1749–1759 show a composition bias toward low complexity; it reads TEATSSPTSSS. Residues 1789–1939 form the bMERB domain; that stretch reads KQEELKRLHK…ERTQDQHFEN (151 aa).

The protein belongs to the Mical family. As to quaternary structure, interacts with PLXNA4. Interacts with RAB1B. Interacts with MAPK1/ERK2. Interacts with RAB1B, RAB35, RAB8A, RAB10, RAB13 and RAB15 (in their GTP-bound forms); binding to RAB1B and RAB35 is of low affinity compared to other Rab proteins; binding to RAB1B and RAB35 is of low affinity compared to other Rab proteins; at least in case of RAB8A may bind 2 molecules of RAB8A simultaneously through a high and a low affinity binding site, respectively. The cofactor is FAD. As to expression, expressed only in testis (at protein level).

Its subcellular location is the cytoplasm. It is found in the nucleus. It carries out the reaction L-methionyl-[F-actin] + NADPH + O2 + H(+) = L-methionyl-(R)-S-oxide-[F-actin] + NADP(+) + H2O. Functionally, methionine monooxygenase that promotes depolymerization of F-actin by mediating oxidation of residues 'Met-44' and 'Met-47' on actin to form methionine-sulfoxide, resulting in actin filament disassembly and preventing repolymerization. Regulates the disassembly of branched actin networks also by oxidizing ARP3B-containing ARP2/3 complexes leading to ARP3B dissociation from the network. Acts as a key regulator of the SRF signaling pathway elicited by nerve growth factor and serum: mediates oxidation and subsequent depolymerization of nuclear actin, leading to increase MKL1/MRTF-A presence in the nucleus and promote SRF:MKL1/MRTF-A-dependent gene transcription. Does not activate SRF:MKL1/MRTF-A through RhoA. This Mus musculus (Mouse) protein is [F-actin]-monooxygenase MICAL2.